The chain runs to 37 residues: Large ribosomal subunit protein bL36 (37 aa).

Belongs to the bacterial ribosomal protein bL36 family.

This chain is Large ribosomal subunit protein bL36, found in Legionella pneumophila subsp. pneumophila (strain Philadelphia 1 / ATCC 33152 / DSM 7513).